A 184-amino-acid polypeptide reads, in one-letter code: NADH-quinone oxidoreductase subunit B (184 aa).

Cys37, Cys38, Cys103, and Cys132 together coordinate [4Fe-4S] cluster.

It belongs to the complex I 20 kDa subunit family. As to quaternary structure, NDH-1 is composed of 14 different subunits. Subunits NuoB, C, D, E, F, and G constitute the peripheral sector of the complex. It depends on [4Fe-4S] cluster as a cofactor.

It localises to the cell membrane. The catalysed reaction is a quinone + NADH + 5 H(+)(in) = a quinol + NAD(+) + 4 H(+)(out). Functionally, NDH-1 shuttles electrons from NADH, via FMN and iron-sulfur (Fe-S) centers, to quinones in the respiratory chain. The immediate electron acceptor for the enzyme in this species is believed to be a menaquinone. Couples the redox reaction to proton translocation (for every two electrons transferred, four hydrogen ions are translocated across the cytoplasmic membrane), and thus conserves the redox energy in a proton gradient. In Beutenbergia cavernae (strain ATCC BAA-8 / DSM 12333 / CCUG 43141 / JCM 11478 / NBRC 16432 / NCIMB 13614 / HKI 0122), this protein is NADH-quinone oxidoreductase subunit B.